The primary structure comprises 1409 residues: L-2-aminoadipate reductase large subunit (1409 aa).

Residues 858-937 (QALSETEQTL…GFASEIDRLL (80 aa)) enclose the Carrier domain. The residue at position 896 (S896) is an O-(pantetheine 4'-phosphoryl)serine.

It belongs to the ATP-dependent AMP-binding enzyme family. Heterodimer of an alpha and a beta subunit. Requires pantetheine 4'-phosphate as cofactor.

It carries out the reaction (S)-2-amino-6-oxohexanoate + NADP(+) + H2O = L-2-aminoadipate + NADPH + 2 H(+). The enzyme catalyses (S)-2-amino-6-oxohexanoate + NAD(+) + H2O = L-2-aminoadipate + NADH + 2 H(+). The catalysed reaction is (S)-2-amino-6-oxohexanoate + AMP + diphosphate + NADP(+) = L-2-aminoadipate + ATP + NADPH + H(+). The protein operates within amino-acid biosynthesis; L-lysine biosynthesis via AAA pathway; L-lysine from L-alpha-aminoadipate (fungal route): step 1/3. Functionally, catalyzes the activation of alpha-aminoadipate by ATP-dependent adenylation and the reduction of activated alpha-aminoadipate by NADPH. The activated alpha-aminoadipate is bound to the phosphopantheinyl group of the enzyme itself before it is reduced to (S)-2-amino-6-oxohexanoate. The protein is L-2-aminoadipate reductase large subunit (lys2) of Penicillium chrysogenum (Penicillium notatum).